A 479-amino-acid polypeptide reads, in one-letter code: Acyltransferase easC (479 aa).

Catalysis depends on H161, which acts as the Proton acceptor.

Belongs to the plant acyltransferase family. Monomer.

It participates in antibiotic biosynthesis. Functionally, acyltransferase; part of the gene cluster that mediates the biosynthesis of emericellamides, secondary metabolites acting as antibiotics. The biosynthesis of emericellamides initiates from the highly reducing polyketide synthase easB which catalyzes the formation of the linear polyketide chain. EasB produces several polyketides that can be further processed by the downstream enzymes. The polyketides are released from easB as linear polyketide carboxylic acids, which are converted to CoA thioesters by the acyl-CoA ligase easD. The substrates are then loaded onto the acyltransferase easC, which shuttles them to the first thiolation (T) domain of the nonribosomal peptide synthetase easA. EasA then performs condensation of the polyketides with one glycine, two alanine, one valine and one leucine residues. A last step of cyclization leads to the production of emericellamides. The polypeptide is Acyltransferase easC (Emericella nidulans (strain FGSC A4 / ATCC 38163 / CBS 112.46 / NRRL 194 / M139) (Aspergillus nidulans)).